A 402-amino-acid chain; its full sequence is Serine/threonine transporter SstT (402 aa).

The next 8 membrane-spanning stretches (helical) occupy residues 17-37 (IAIG…ITVI), 44-64 (FVGG…ANAL), 79-99 (IVLY…SHYI), 138-158 (ALSQ…GFAM), 179-199 (IVRW…FDTI), 212-232 (VLIL…NPII), 295-315 (MAGA…TLGI), and 336-356 (ASGI…LFGI).

It belongs to the dicarboxylate/amino acid:cation symporter (DAACS) (TC 2.A.23) family.

The protein resides in the cell membrane. The enzyme catalyses L-serine(in) + Na(+)(in) = L-serine(out) + Na(+)(out). The catalysed reaction is L-threonine(in) + Na(+)(in) = L-threonine(out) + Na(+)(out). In terms of biological role, involved in the import of serine and threonine into the cell, with the concomitant import of sodium (symport system). This Streptococcus thermophilus (strain ATCC BAA-491 / LMD-9) protein is Serine/threonine transporter SstT.